Reading from the N-terminus, the 432-residue chain is Trigger factor (432 aa).

Positions 165–250 (GDFAKIDFEG…LKEIQVKAPQ (86 aa)) constitute a PPIase FKBP-type domain.

This sequence belongs to the FKBP-type PPIase family. Tig subfamily.

It is found in the cytoplasm. It carries out the reaction [protein]-peptidylproline (omega=180) = [protein]-peptidylproline (omega=0). Its function is as follows. Involved in protein export. Acts as a chaperone by maintaining the newly synthesized protein in an open conformation. Functions as a peptidyl-prolyl cis-trans isomerase. In Wolinella succinogenes (strain ATCC 29543 / DSM 1740 / CCUG 13145 / JCM 31913 / LMG 7466 / NCTC 11488 / FDC 602W) (Vibrio succinogenes), this protein is Trigger factor.